A 492-amino-acid chain; its full sequence is Malonyl-CoA decarboxylase, mitochondrial (492 aa).

The tract at residues 1 to 28 is disordered; sequence MRGLGPGLRARRLLPLRSPPRPPGPRGR. The N-terminal 38 residues, 1–38, are a transit peptide targeting the mitochondrion; it reads MRGLGPGLRARRLLPLRSPPRPPGPRGRRLCGGLAASA. Residues 39 to 189 are alpha-helical domain; that stretch reads MDELLRRAVP…VLKSMLSEWF (151 aa). The residue at position 58 (K58) is an N6-acetyllysine. The residue at position 167 (K167) is an N6-acetyllysine; alternate. Residue K167 is modified to N6-succinyllysine; alternate. The interval 190–492 is catalytic domain; it reads SSGFLNLERV…VAQFQNNSKL (303 aa). The residue at position 210 (K210) is an N6-acetyllysine. K221 is subject to N6-succinyllysine. A malonyl-CoA-binding site is contributed by 298-304; that stretch reads QGVELGT. N6-acetyllysine is present on K316. S328 is a binding site for malonyl-CoA. Residue S328 is the Proton acceptor of the active site. K385 is subject to N6-acetyllysine; alternate. An N6-succinyllysine; alternate modification is found at K385. An N6-acetyllysine modification is found at K388. Residue H422 participates in malonyl-CoA binding. H422 (proton donor) is an active-site residue. Residues K441 and K471 each carry the N6-acetyllysine modification. The short motif at 490–492 is the Microbody targeting signal element; that stretch reads SKL.

Homotetramer. Dimer of dimers. The two subunits within a dimer display conformational differences suggesting that at any given moment, only one of the two subunits is competent for malonyl-CoA binding and catalytic activity. Under oxidizing conditions, can form disulfide-linked homotetramers (in vitro). Associates with the peroxisomal targeting signal receptor PEX5. Interchain disulfide bonds may form in peroxisomes (Potential). Interchain disulfide bonds are not expected to form in the reducing environment of the cytoplasm and mitochondria. In terms of processing, acetylation at Lys-471 activates malonyl-CoA decarboxylase activity. Deacetylation at Lys-471 by SIRT4 represses activity, leading to promote lipogenesis.

The protein localises to the cytoplasm. It is found in the mitochondrion matrix. The protein resides in the peroxisome. Its subcellular location is the peroxisome matrix. It catalyses the reaction malonyl-CoA + H(+) = acetyl-CoA + CO2. Its pathway is metabolic intermediate biosynthesis; acetyl-CoA biosynthesis; acetyl-CoA from malonyl-CoA: step 1/1. Malonyl-CoA decarboxylase activity does not require any cofactors or divalent metal ions. In terms of biological role, catalyzes the conversion of malonyl-CoA to acetyl-CoA. In the fatty acid biosynthesis MCD selectively removes malonyl-CoA and thus assures that methyl-malonyl-CoA is the only chain elongating substrate for fatty acid synthase and that fatty acids with multiple methyl side chains are produced. In peroxisomes it may be involved in degrading intraperoxisomal malonyl-CoA, which is generated by the peroxisomal beta-oxidation of odd chain-length dicarboxylic fatty acids. Plays a role in the metabolic balance between glucose and lipid oxidation in muscle independent of alterations in insulin signaling. Plays a role in controlling the extent of ischemic injury by promoting glucose oxidation. The sequence is that of Malonyl-CoA decarboxylase, mitochondrial from Mus musculus (Mouse).